The primary structure comprises 161 residues: Phosphopantetheine adenylyltransferase (161 aa).

Ser-9 provides a ligand contact to substrate. Residues 9-10 and His-17 each bind ATP; that span reads SF. Lys-41, Thr-73, and Arg-87 together coordinate substrate. ATP contacts are provided by residues 88–90, Glu-98, and 123–129; these read GIR and YQYVSSS.

The protein belongs to the bacterial CoaD family. In terms of assembly, homohexamer. The cofactor is Mg(2+).

Its subcellular location is the cytoplasm. The enzyme catalyses (R)-4'-phosphopantetheine + ATP + H(+) = 3'-dephospho-CoA + diphosphate. It functions in the pathway cofactor biosynthesis; coenzyme A biosynthesis; CoA from (R)-pantothenate: step 4/5. Reversibly transfers an adenylyl group from ATP to 4'-phosphopantetheine, yielding dephospho-CoA (dPCoA) and pyrophosphate. The protein is Phosphopantetheine adenylyltransferase of Levilactobacillus brevis (strain ATCC 367 / BCRC 12310 / CIP 105137 / JCM 1170 / LMG 11437 / NCIMB 947 / NCTC 947) (Lactobacillus brevis).